The sequence spans 340 residues: Coproporphyrin III ferrochelatase (340 aa).

The Fe-coproporphyrin III site is built by serine 52 and tyrosine 121. Fe(2+) is bound by residues histidine 177 and glutamate 260.

Belongs to the ferrochelatase family.

The protein resides in the cytoplasm. The enzyme catalyses Fe-coproporphyrin III + 2 H(+) = coproporphyrin III + Fe(2+). It functions in the pathway porphyrin-containing compound metabolism; protoheme biosynthesis. In terms of biological role, involved in coproporphyrin-dependent heme b biosynthesis. Catalyzes the insertion of ferrous iron into coproporphyrin III to form Fe-coproporphyrin III. The chain is Coproporphyrin III ferrochelatase from Mycobacteroides abscessus (strain ATCC 19977 / DSM 44196 / CCUG 20993 / CIP 104536 / JCM 13569 / NCTC 13031 / TMC 1543 / L948) (Mycobacterium abscessus).